We begin with the raw amino-acid sequence, 751 residues long: Catalase-peroxidase (751 aa).

Residues 92–240 (WHSAGTYRVT…VAAAHMGLIY (149 aa)) constitute a cross-link (tryptophyl-tyrosyl-methioninium (Trp-Tyr) (with M-266)). The active-site Proton acceptor is the His93. A cross-link (tryptophyl-tyrosyl-methioninium (Tyr-Met) (with W-92)) is located at residues 240–266 (YVNPEGPDGVPDPIAAARDIRTTFHRM). Position 281 (His281) interacts with heme b.

This sequence belongs to the peroxidase family. Peroxidase/catalase subfamily. As to quaternary structure, homodimer or homotetramer. Heme b serves as cofactor. In terms of processing, formation of the three residue Trp-Tyr-Met cross-link is important for the catalase, but not the peroxidase activity of the enzyme.

The protein localises to the cytoplasm. The catalysed reaction is H2O2 + AH2 = A + 2 H2O. It carries out the reaction 2 H2O2 = O2 + 2 H2O. In terms of biological role, bifunctional enzyme with both catalase and broad-spectrum peroxidase activity. In Phaeosphaeria nodorum (strain SN15 / ATCC MYA-4574 / FGSC 10173) (Glume blotch fungus), this protein is Catalase-peroxidase.